The primary structure comprises 143 residues: Ribosome-binding factor A (143 aa).

Residues 1–20 (MRFMGKNKFHTGPGPSQRQL) form a disordered region.

The protein belongs to the RbfA family. As to quaternary structure, monomer. Binds 30S ribosomal subunits, but not 50S ribosomal subunits or 70S ribosomes.

It localises to the cytoplasm. One of several proteins that assist in the late maturation steps of the functional core of the 30S ribosomal subunit. Associates with free 30S ribosomal subunits (but not with 30S subunits that are part of 70S ribosomes or polysomes). Required for efficient processing of 16S rRNA. May interact with the 5'-terminal helix region of 16S rRNA. This Roseobacter denitrificans (strain ATCC 33942 / OCh 114) (Erythrobacter sp. (strain OCh 114)) protein is Ribosome-binding factor A.